The sequence spans 514 residues: MDVIKKKHWWQSDQLKWSVIGLLGLLVGYLVVLMYVQGEYLFAIMTLILSSAGLYIFANRKTYAWRYVYPGLAGMGLFVLFPLVCTIAIAFTNYSSTNQLTFERAQQVLMDRSYQAGKTYNFGLYPAGDEWQLALTDGETGKHYLSGAFSFGGEQKLQLKETDALPGGERANLRIITQNRLALNQITAVLPDESKVVMSSLRQFSGTRPLYTLADDGLLTNNQSGVKYRPNNDSGYYQSINADGSWGDEKLSPGYTVTIGAKNFTRVFTDEGIQKPFFAIFVWTVVFSVLTVVLTVAVGMVLACLVQWEALKGKAIYRVLLILPYAVPSFISILIFKGLFNQSFGEINMMLSALFGIKPAWFSDPNTARAMVIIVNTWLGYPYMMILCMGLLKAIPDDLYEASAMDGAGPFQNFFKITLPLLIKPLTPLMIASFAFNFNNFVLIQLLTNGGPDRLGTTTPAGYTDLLVSYTYRIAFEGGGGQDFGLAAAIATLIFLLVGALAIVNLKATRMKFD.

Topologically, residues 1 to 16 are cytoplasmic; sequence MDVIKKKHWWQSDQLK. The helical transmembrane segment at 17-36 threads the bilayer; sequence WSVIGLLGLLVGYLVVLMYV. Residues 37–39 are Periplasmic-facing; it reads QGE. A helical membrane pass occupies residues 40–57; it reads YLFAIMTLILSSAGLYIF. Over 58–69 the chain is Cytoplasmic; it reads ANRKTYAWRYVY. A helical membrane pass occupies residues 70-92; sequence PGLAGMGLFVLFPLVCTIAIAFT. Residues 93–283 are Periplasmic-facing; the sequence is NYSSTNQLTF…QKPFFAIFVW (191 aa). In terms of domain architecture, ABC transmembrane type-1 spans 281-505; sequence FVWTVVFSVL…LLVGALAIVN (225 aa). A helical transmembrane segment spans residues 284-306; sequence TVVFSVLTVVLTVAVGMVLACLV. The Cytoplasmic segment spans residues 307-318; sequence QWEALKGKAIYR. The helical transmembrane segment at 319 to 341 threads the bilayer; sequence VLLILPYAVPSFISILIFKGLFN. The Periplasmic portion of the chain corresponds to 342 to 369; sequence QSFGEINMMLSALFGIKPAWFSDPNTAR. The helical transmembrane segment at 370–392 threads the bilayer; that stretch reads AMVIIVNTWLGYPYMMILCMGLL. Residues 393–412 lie on the Cytoplasmic side of the membrane; that stretch reads KAIPDDLYEASAMDGAGPFQ. The chain crosses the membrane as a helical span at residues 413-435; that stretch reads NFFKITLPLLIKPLTPLMIASFA. Over 436-483 the chain is Periplasmic; that stretch reads FNFNNFVLIQLLTNGGPDRLGTTTPAGYTDLLVSYTYRIAFEGGGGQD. The chain crosses the membrane as a helical span at residues 484-506; that stretch reads FGLAAAIATLIFLLVGALAIVNL. Residues 507–514 lie on the Cytoplasmic side of the membrane; the sequence is KATRMKFD.

Belongs to the binding-protein-dependent transport system permease family. MalFG subfamily. As to quaternary structure, the complex is composed of two ATP-binding proteins (MalK), two transmembrane proteins (MalG and MalF) and a solute-binding protein (MalE).

It localises to the cell inner membrane. Its function is as follows. Part of the ABC transporter complex MalEFGK involved in maltose/maltodextrin import. Probably responsible for the translocation of the substrate across the membrane. In Salmonella typhi, this protein is Maltose/maltodextrin transport system permease protein MalF (malF).